Consider the following 190-residue polypeptide: Endoribonuclease YbeY (190 aa).

The disordered stretch occupies residues 1 to 25 (MSQPRPGHRPDCNGADPDSNFASMT). Zn(2+) contacts are provided by His147, His151, and His157.

It belongs to the endoribonuclease YbeY family. Zn(2+) serves as cofactor.

It is found in the cytoplasm. In terms of biological role, single strand-specific metallo-endoribonuclease involved in late-stage 70S ribosome quality control and in maturation of the 3' terminus of the 16S rRNA. This is Endoribonuclease YbeY from Rhodopseudomonas palustris (strain ATCC BAA-98 / CGA009).